The primary structure comprises 300 residues: Ribonuclease HIII (300 aa).

An RNase H type-2 domain is found at 83 to 300; the sequence is IPIIGSDEVG…THKAQALLTK (218 aa). The a divalent metal cation site is built by Asp-89, Glu-90, and Asp-194.

The protein belongs to the RNase HII family. RnhC subfamily. It depends on Mn(2+) as a cofactor. Requires Mg(2+) as cofactor.

Its subcellular location is the cytoplasm. It catalyses the reaction Endonucleolytic cleavage to 5'-phosphomonoester.. Its function is as follows. Endonuclease that specifically degrades the RNA of RNA-DNA hybrids. The protein is Ribonuclease HIII of Streptococcus pyogenes serotype M12 (strain MGAS2096).